A 569-amino-acid polypeptide reads, in one-letter code: Probable protein phosphatase 2C BIPP2C1 (569 aa).

Disordered stretches follow at residues 166 to 212 (GSSN…SSKV) and 251 to 279 (SLDD…GSSI). A compositionally biased stretch (low complexity) spans 174–183 (SEVGVESECG). Residues 329–564 (AAMLPHPSKV…DDVTVVVSVV (236 aa)) enclose the PPM-type phosphatase domain. The Mn(2+) site is built by D358, G359, D488, and D555.

Belongs to the PP2C family. Mg(2+) serves as cofactor. The cofactor is Mn(2+).

The enzyme catalyses O-phospho-L-seryl-[protein] + H2O = L-seryl-[protein] + phosphate. The catalysed reaction is O-phospho-L-threonyl-[protein] + H2O = L-threonyl-[protein] + phosphate. In terms of biological role, may play a role in responses to biotic and abiotic stresses. This chain is Probable protein phosphatase 2C BIPP2C1 (BIPP2C1), found in Oryza sativa subsp. indica (Rice).